Here is a 2157-residue protein sequence, read N- to C-terminus: Polyketide synthase 2 (2157 aa).

The N-terminal acylcarrier protein transacylase domain (SAT) stretch occupies residues 7–244 (FIFGDQTGGF…IPIPIWAPYH (238 aa)). One can recognise a Ketosynthase family 3 (KS3) domain in the interval 374–807 (DAKIAIIGMS…GGNSALLLED (434 aa)). Residues cysteine 546, histidine 681, and histidine 723 each act as for beta-ketoacyl synthase activity in the active site. The interval 908-1213 (GFVFSGQGAQ…ASLHRKDDGW (306 aa)) is malonyl-CoA:ACP transacylase (MAT) domain. The active-site For acyl/malonyl transferase activity is the serine 998. The segment at 1290 to 1605 (TSSVQKIIQQ…RSLLNKVLPP (316 aa)) is product template (PT) domain. Residues 1294–1428 (QKIIQQTDGP…CLLCFADPNS (135 aa)) form an N-terminal hotdog fold region. Residues 1294–1600 (QKIIQQTDGP…FLGMSRSLLN (307 aa)) form the PKS/mFAS DH domain. Histidine 1327 (proton acceptor; for dehydratase activity) is an active-site residue. A C-terminal hotdog fold region spans residues 1455-1600 (TDSLLSKGIV…FLGMSRSLLN (146 aa)). Aspartate 1514 serves as the catalytic Proton donor; for dehydratase activity. A disordered region spans residues 1629–1653 (AKDTERRPLDIPTRAQRQPNSPPTG). One can recognise a Carrier 1 domain in the interval 1649–1726 (SPPTGTLGRI…ELKEFLGADQ (78 aa)). An O-(pantetheine 4'-phosphoryl)serine modification is found at serine 1686. The disordered stretch occupies residues 1729 to 1765 (DDAVACESSNGQHTPQTSDKGSGTLAAQKPDDDTGSD). Residues 1735 to 1749 (ESSNGQHTPQTSDKG) are compositionally biased toward polar residues. The region spanning 1765 to 1839 (DTTLHRVCAI…SLQKALCGTE (75 aa)) is the Carrier 2 domain. Position 1799 is an O-(pantetheine 4'-phosphoryl)serine (serine 1799). The tract at residues 1875-2151 (ASPPHATSIL…MAEMGDLIGE (277 aa)) is thioesterase (TE) domain. Residue serine 1981 is the For thioesterase activity of the active site.

Polyketide synthase; part of the Pks2 gene cluster that mediates the formation of infectious structures (appressoria), enabling these fungi to kill insects faster. The product of the Pks2 gene cluster is different from the one of Pks1 and has still not been identified. The protein is Polyketide synthase 2 of Metarhizium guizhouense (strain ARSEF 977).